Reading from the N-terminus, the 530-residue chain is N-acetylmuramoyl-L-alanine amidase (530 aa).

An N-terminal signal peptide occupies residues 1–22; it reads MKAWGALWIVLGLLLWPEPGAA. N-linked (GlcNAc...) asparagine glycans are attached at residues Asn61, Asn80, and Asn174. The residue at position 219 (Ser219) is a Phosphoserine. The N-linked (GlcNAc...) asparagine glycan is linked to Asn335. The region spanning 386–512 is the N-acetylmuramoyl-L-alanine amidase domain; the sequence is FLYVHHTYVP…RQLVLTHCPG (127 aa). Residue His390 participates in Zn(2+) binding. Cysteines 399 and 405 form a disulfide. Residue Asn465 is glycosylated (N-linked (GlcNAc...) asparagine). Zn(2+)-binding residues include His502 and Cys510.

This sequence belongs to the N-acetylmuramoyl-L-alanine amidase 2 family. The cofactor is Zn(2+). As to expression, strongly expressed in liver and fetal liver.

It is found in the secreted. Its subcellular location is the membrane. The enzyme catalyses Hydrolyzes the link between N-acetylmuramoyl residues and L-amino acid residues in certain cell-wall glycopeptides.. Functionally, may play a scavenger role by digesting biologically active peptidoglycan (PGN) into biologically inactive fragments. Has no direct bacteriolytic activity. The chain is N-acetylmuramoyl-L-alanine amidase (Pglyrp2) from Mus musculus (Mouse).